Here is a 206-residue protein sequence, read N- to C-terminus: Peroxynitrite isomerase (206 aa).

Residues 21–27 (GTWEGNG) carry the GXWXGXG motif. His190 is a heme b binding site.

This sequence belongs to the nitrobindin family. Homodimer. Heme b is required as a cofactor.

The catalysed reaction is peroxynitrite = nitrate. It functions in the pathway nitrogen metabolism. In terms of biological role, heme-binding protein able to scavenge peroxynitrite and to protect free L-tyrosine against peroxynitrite-mediated nitration, by acting as a peroxynitrite isomerase that converts peroxynitrite to nitrate. Therefore, this protein likely plays a role in peroxynitrite sensing and in the detoxification of reactive nitrogen and oxygen species (RNS and ROS, respectively). Is able to bind nitric oxide (NO) in vitro, but may act as a sensor of peroxynitrite levels in vivo. This Kocuria rhizophila (strain ATCC 9341 / DSM 348 / NBRC 103217 / DC2201) protein is Peroxynitrite isomerase.